The chain runs to 248 residues: Triosephosphate isomerase B (248 aa).

Substrate is bound by residues asparagine 11 and lysine 13. Catalysis depends on histidine 95, which acts as the Electrophile. The active-site Proton acceptor is the glutamate 165.

This sequence belongs to the triosephosphate isomerase family. Homodimer.

The protein resides in the cytoplasm. It carries out the reaction dihydroxyacetone phosphate = methylglyoxal + phosphate. It catalyses the reaction D-glyceraldehyde 3-phosphate = dihydroxyacetone phosphate. It participates in carbohydrate degradation; glycolysis; D-glyceraldehyde 3-phosphate from glycerone phosphate: step 1/1. The protein operates within carbohydrate biosynthesis; gluconeogenesis. Triosephosphate isomerase is an extremely efficient metabolic enzyme that catalyzes the interconversion between dihydroxyacetone phosphate (DHAP) and D-glyceraldehyde-3-phosphate (G3P) in glycolysis and gluconeogenesis. Functionally, it is also responsible for the non-negligible production of methylglyoxal a reactive cytotoxic side-product that modifies and can alter proteins, DNA and lipids. The polypeptide is Triosephosphate isomerase B (tpi1b) (Danio rerio (Zebrafish)).